Here is a 227-residue protein sequence, read N- to C-terminus: uncharacterized protein (227 aa).

Belongs to the flavoredoxin family. FMN serves as cofactor.

This is an uncharacterized protein from Deinococcus radiodurans (strain ATCC 13939 / DSM 20539 / JCM 16871 / CCUG 27074 / LMG 4051 / NBRC 15346 / NCIMB 9279 / VKM B-1422 / R1).